A 631-amino-acid chain; its full sequence is ATP-dependent RNA helicase mrh4, mitochondrial (631 aa).

A mitochondrion-targeting transit peptide spans 1–39; the sequence is MYPLGRVSLPVRSPVCLFCQNRTSSLLPSAYVWQSARTM. A disordered region spans residues 55 to 111; that stretch reads PNVAKTSLKKKRNDTDRFGPFAGMNQTEARIRDDPRSRSPASLKRSKAPSDESGRKD. Basic and acidic residues predominate over residues 102 to 111; the sequence is APSDESGRKD. Positions 143-176 match the Q motif motif; the sequence is TSFDQFPLLPVVRHSIFSQALPGLHDVTPTPIQR. The interval 181-200 is disordered; that stretch reads RLLDDTNKDKKPKKRAEGEP. Residues 196–408 enclose the Helicase ATP-binding domain; the sequence is AEGEPEYDQY…RKKYPDIQRL (213 aa). Residue 209–216 participates in ATP binding; sequence AETGSGKT. A DEAD box motif is present at residues 355 to 358; the sequence is DEAD. Positions 442 to 631 constitute a Helicase C-terminal domain; sequence DVIWSIGKAG…EGMFRGQALI (190 aa).

It belongs to the DEAD box helicase family. MRH4 subfamily.

It localises to the mitochondrion. It carries out the reaction ATP + H2O = ADP + phosphate + H(+). ATP-binding RNA helicase involved in mitochondrial RNA metabolism. Required for maintenance of mitochondrial DNA. The chain is ATP-dependent RNA helicase mrh4, mitochondrial (mrh4) from Aspergillus terreus (strain NIH 2624 / FGSC A1156).